A 305-amino-acid polypeptide reads, in one-letter code: E3 ubiquitin-protein ligase RNF115 (305 aa).

At Ala2 the chain carries N-acetylalanine. Basic and acidic residues predominate over residues Asn100–His110. The segment at Asn100–Ser139 is disordered. A Phosphoserine modification is found at Ser133. An RING-type zinc finger spans residues Cys229–Arg270. The interval Asn274–Phe305 is disordered. The span at Arg280–Ser297 shows a compositional bias: polar residues.

As to quaternary structure, interacts with RAB7A. Interacts with EGFR and FLT3. Interacts with BST2. Interacts with STX17. Interacts with YWHAE. In terms of processing, phosphorylated by AKT1, allowing association with the 14-3-3 chaperones that facilitates associating with TLRs. Post-translationally, deubiquitinated by USP9X; antogonizing its autoubiquitination and subsequent proteasomal degradation. RING-type zinc finger-dependent and E2-dependent autoubiquitination.

The protein resides in the cytoplasm. The protein localises to the cytoplasmic vesicle. It localises to the phagosome. Its subcellular location is the nucleus. It is found in the endoplasmic reticulum. The protein resides in the golgi apparatus. The catalysed reaction is S-ubiquitinyl-[E2 ubiquitin-conjugating enzyme]-L-cysteine + [acceptor protein]-L-lysine = [E2 ubiquitin-conjugating enzyme]-L-cysteine + N(6)-ubiquitinyl-[acceptor protein]-L-lysine.. The protein operates within protein modification; protein ubiquitination. E3 ubiquitin-protein ligase that catalyzes the 'Lys-48'- and/or 'Lys-63'-linked polyubiquitination of various substrates and thereby plays a role in a number of signaling pathways including autophagy, innate immunity, cell proliferation and cell death. Plays a role in the endosomal trafficking and degradation of membrane receptors including EGFR, FLT3, MET and CXCR4 through their polyubiquitination. Participates together with BST2 in antiviral immunity by facilitating the internalization of HIV-1 virions into intracellular vesicles leading to their lysosomal degradation. Also possesses an antiviral activity independently of BST2 by promoting retroviral GAG proteins ubiquitination, redistribution to endo-lysosomal compartments and, ultimately, lysosomal degradation. Catalyzes distinct types of ubiquitination on MAVS and STING1 at different phases of viral infection to promote innate antiviral response. Mediates the 'Lys-48'-linked ubiquitination of MAVS leading to its proteasomal degradation and ubiquitinates STING1 via 'Lys-63'-linked polyubiquitination, critical for its oligomerization and the subsequent recruitment of TBK1. Plays a positive role in the autophagosome-lysosome fusion by interacting with STX17 and enhancing its stability without affecting 'Lys-48'- or 'Lys-63'-linked polyubiquitination levels, which in turn promotes autophagosome maturation. Negatively regulates TLR-induced expression of proinflammatory cytokines by catalyzing 'Lys-11'-linked ubiquitination of RAB1A and RAB13 to inhibit post-ER trafficking of TLRs to the Golgi by RAB1A and subsequently from the Golgi apparatus to the cell surface by RAB13. In Mus musculus (Mouse), this protein is E3 ubiquitin-protein ligase RNF115.